The chain runs to 262 residues: Insulin-like growth factor-binding protein 1 (262 aa).

The signal sequence occupies residues 1 to 25 (MPEVPAVRAWPLLLSLALQLGAAAG). One can recognise an IGFBP N-terminal domain in the interval 28–108 (QPLHCAPCSA…TRGQGACMPA (81 aa)). Cystine bridges form between Cys32–Cys59, Cys35–Cys61, Cys43–Cys62, Cys50–Cys65, Cys72–Cys85, and Cys79–Cys105. The tract at residues 101-133 (GQGACMPAPSAEATETKDPAAPETTSPESTEMT) is disordered. The span at 121 to 131 (APETTSPESTE) shows a compositional bias: low complexity. Residues Ser126, Ser129, and Ser147 each carry the phosphoserine modification. Tyr161 carries the phosphotyrosine modification. The region spanning 176-254 (KEPCQRELYK…STAVRGDPKC (79 aa)) is the Thyroglobulin type-1 domain. Disulfide bonds link Cys179/Cys209, Cys220/Cys231, and Cys233/Cys254. Ser245 is subject to Phosphoserine. Residues 249–251 (RGD) carry the Cell attachment site motif.

Binds equally well IGF1 and IGF2. Interacts with integrin ITGA5:ITGB1. Interacts with VHL; this interaction inhibits HIF1A degradation.

The protein localises to the secreted. Its function is as follows. Multifunctional protein that plays a critical role in regulating the availability of IGFs such as IGF1 and IGF2 to their receptors and thereby regulates IGF-mediated cellular processes including cell migration, proliferation, differentiation or apoptosis in a cell-type specific manner. Also plays a positive role in cell migration by interacting with integrin ITGA5:ITGB1 through its RGD motif. Mechanistically, binding to integrins leads to activation of focal adhesion kinase/PTK2 and stimulation of the mitogen-activated protein kinase (MAPK) pathway. Regulates cardiomyocyte apoptosis by suppressing HIF-1alpha/HIF1A degradation through ubiquitination. This is Insulin-like growth factor-binding protein 1 (IGFBP1) from Sus scrofa (Pig).